Here is a 380-residue protein sequence, read N- to C-terminus: Probable inorganic pyrophosphatase (380 aa).

Residues Asp198, Asp203, and Asp235 each contribute to the Mg(2+) site.

Belongs to the PPase family. Mg(2+) is required as a cofactor.

It catalyses the reaction diphosphate + H2O = 2 phosphate + H(+). This is Probable inorganic pyrophosphatase from Plasmodium falciparum (isolate 3D7).